The following is a 589-amino-acid chain: Progranulin (589 aa).

The signal sequence occupies residues M1–G17. N-linked (GlcNAc...) asparagine glycosylation occurs at N38. Cystine bridges form between C125–C138 and C132–C148. N263 carries an N-linked (GlcNAc...) asparagine glycan. Cystine bridges form between C282-C294, C288-C304, C295-C312, C305-C319, C313-C326, C320-C333, C364-C376, C370-C386, C395-C408, and C402-C414. A glycan (N-linked (GlcNAc...) asparagine) is linked at N373. N-linked (GlcNAc...) asparagine glycosylation is present at N526.

It belongs to the granulin family. Progranulin is secreted as a homodimer. Interacts with SLPI; interaction protects progranulin from proteolysis. Interacts (via region corresponding to granulin-7 peptide) with CTSD; stabilizes CTSD and increases its proteolytic activity. Interacts (via region corresponding to granulin-7 peptide) with SORT1; this interaction mediates endocytosis and lysosome delivery of progranulin; interaction occurs at the neuronal cell surface in a stressed nervous system. Interacts with PSAP; facilitates lysosomal delivery of progranulin from the extracellular space and the biosynthetic pathway. Forms a complex with PSAP and M6PR; PSAP bridges the binding between progranulin and M6PR. Forms a complex with PSAP and SORT1; progranulin bridges the interaction between PSAP and SORT1; facilitates lysosomal targeting of PSAP via SORT1; interaction enhances PSAP uptake in primary cortical neurons. Interacts (via regions corresponding to granulin-2 and granulin-7 peptides) with GBA1; this interaction prevents aggregation of GBA1-SCARB2 complex via interaction with HSPA1A upon stress. Interacts (via region corresponding to granulin-7 peptide) with HSPA1A; mediates recruitment of HSPA1A to GBA1 and prevents GBA1 aggregation in response to stress. N-glycosylated. In terms of processing, cleaved by ELANE; proteolysis is blocked by SLPI and is concentration- and time-dependent and induces CXCL8/IL-8 production; granulin-3 and granulin-4 are resistant to ELANE. Cleaved by CTSL in lysosome thus regulating the maturation and turnover of progranulin within the lysosome. As to expression, highly expressed at the wound site and diminishes away from the wound. Not expressed in fibroblasts and endothelial cells in intact skin. In adult brain, expressed primarily in neurons and in resting and reactive microglia. Expressed in both neurons and microglia. Highly expressed in activated microglia in response to injury. Expressed in macrophage.

Its subcellular location is the secreted. It localises to the lysosome. Functionally, secreted protein that acts as a key regulator of lysosomal function and as a growth factor involved in inflammation, wound healing and cell proliferation. Regulates protein trafficking to lysosomes, and also the activity of lysosomal enzymes. Also facilitates the acidification of lysosomes, causing degradation of mature CTSD by CTSB. In addition, functions as a wound-related growth factor that acts directly on dermal fibroblasts and endothelial cells to promote division, migration and the formation of capillary-like tubule structures. Also promotes epithelial cell proliferation by blocking TNF-mediated neutrophil activation preventing release of oxidants and proteases. Moreover, modulates inflammation in neurons by preserving neurons survival, axonal outgrowth and neuronal integrity. Its function is as follows. Inhibits epithelial cell proliferation and induces epithelial cells to secrete IL-8. In terms of biological role, stabilizes CTSD through interaction with CTSD leading to maintain its aspartic-type peptidase activity. The protein is Progranulin (Grn) of Mus musculus (Mouse).